A 1582-amino-acid polypeptide reads, in one-letter code: Hybrid PKS-NRPS synthetase TAS1 (1582 aa).

A condensation (C) domain region spans residues 33–387; it reads IPLSKVQEVL…GEDTAAASRV (355 aa). The tract at residues 499-892 is adenylation (A) domain; that stretch reads RSRAATQPDE…KLHILGRMNN (394 aa). Positions 1015–1092 constitute a Carrier domain; that stretch reads NLVDRLEASI…RQAQRLSELV (78 aa). One can recognise a Ketosynthase family 3 (KS3) domain in the interval 1127 to 1574; that stretch reads APLFAIVGMA…GVNAHCILAS (448 aa). Active-site for beta-ketoacyl synthase activity residues include Cys1294 and His1432. A disordered region spans residues 1460-1485; it reads ESRCSSGAISPTGTEQQPSDTKQTPR. The segment covering 1462–1485 has biased composition (polar residues); the sequence is RCSSGAISPTGTEQQPSDTKQTPR. Residue Asn1498 is the For beta-ketoacyl synthase activity of the active site.

This sequence in the N-terminal section; belongs to the NRP synthetase family. Pantetheine 4'-phosphate is required as a cofactor.

The enzyme catalyses acetoacetyl-CoA + L-isoleucine + ATP = tenuazonic acid + AMP + diphosphate + CoA + 2 H(+). Its function is as follows. Hybrid PKS-NRPS synthetase that mediates the biosynthesis of the toxin tenuazonic acid (TeA), an inhibitor of protein biosynthesis on ribosomes by suppressing the release of new protein. TAS1 alone is sufficient for TeA synthesis via the condensation of isoleucine (Ile) with acetoacetyl-CoA by the N-terminal NRPS module and subsequent cyclization conducted by the C-terminal KS domain. The polypeptide is Hybrid PKS-NRPS synthetase TAS1 (Cordyceps militaris (strain CM01) (Caterpillar fungus)).